The sequence spans 179 residues: Large ribosomal subunit protein uL5 (179 aa).

It belongs to the universal ribosomal protein uL5 family. As to quaternary structure, part of the 50S ribosomal subunit; part of the 5S rRNA/L5/L18/L25 subcomplex. Contacts the 5S rRNA and the P site tRNA. Forms a bridge to the 30S subunit in the 70S ribosome.

Its function is as follows. This is one of the proteins that bind and probably mediate the attachment of the 5S RNA into the large ribosomal subunit, where it forms part of the central protuberance. In the 70S ribosome it contacts protein S13 of the 30S subunit (bridge B1b), connecting the 2 subunits; this bridge is implicated in subunit movement. Contacts the P site tRNA; the 5S rRNA and some of its associated proteins might help stabilize positioning of ribosome-bound tRNAs. The protein is Large ribosomal subunit protein uL5 of Clostridium perfringens (strain ATCC 13124 / DSM 756 / JCM 1290 / NCIMB 6125 / NCTC 8237 / Type A).